The following is a 126-amino-acid chain: Aspartate 1-decarboxylase (126 aa).

The active-site Schiff-base intermediate with substrate; via pyruvic acid is Ser-25. A Pyruvic acid (Ser) modification is found at Ser-25. Thr-57 lines the substrate pocket. Catalysis depends on Tyr-58, which acts as the Proton donor. A substrate-binding site is contributed by 73 to 75 (GGA).

Belongs to the PanD family. In terms of assembly, heterooctamer of four alpha and four beta subunits. Pyruvate serves as cofactor. Post-translationally, is synthesized initially as an inactive proenzyme, which is activated by self-cleavage at a specific serine bond to produce a beta-subunit with a hydroxyl group at its C-terminus and an alpha-subunit with a pyruvoyl group at its N-terminus.

Its subcellular location is the cytoplasm. The catalysed reaction is L-aspartate + H(+) = beta-alanine + CO2. It participates in cofactor biosynthesis; (R)-pantothenate biosynthesis; beta-alanine from L-aspartate: step 1/1. Its function is as follows. Catalyzes the pyruvoyl-dependent decarboxylation of aspartate to produce beta-alanine. This is Aspartate 1-decarboxylase from Acinetobacter baylyi (strain ATCC 33305 / BD413 / ADP1).